The sequence spans 117 residues: Large ribosomal subunit protein eL34 (117 aa).

It belongs to the eukaryotic ribosomal protein eL34 family. As to quaternary structure, component of the large ribosomal subunit.

The protein localises to the cytoplasm. It is found in the cytosol. It localises to the endoplasmic reticulum. Its function is as follows. Component of the large ribosomal subunit. The ribosome is a large ribonucleoprotein complex responsible for the synthesis of proteins in the cell. In Ictalurus punctatus (Channel catfish), this protein is Large ribosomal subunit protein eL34 (rpl34).